We begin with the raw amino-acid sequence, 298 residues long: 4-hydroxy-tetrahydrodipicolinate synthase (298 aa).

T51 serves as a coordination point for pyruvate. The active-site Proton donor/acceptor is the Y139. K167 acts as the Schiff-base intermediate with substrate in catalysis. Pyruvate is bound at residue I209.

Belongs to the DapA family. As to quaternary structure, homotetramer; dimer of dimers.

It is found in the cytoplasm. It carries out the reaction L-aspartate 4-semialdehyde + pyruvate = (2S,4S)-4-hydroxy-2,3,4,5-tetrahydrodipicolinate + H2O + H(+). It participates in amino-acid biosynthesis; L-lysine biosynthesis via DAP pathway; (S)-tetrahydrodipicolinate from L-aspartate: step 3/4. Its function is as follows. Catalyzes the condensation of (S)-aspartate-beta-semialdehyde [(S)-ASA] and pyruvate to 4-hydroxy-tetrahydrodipicolinate (HTPA). The chain is 4-hydroxy-tetrahydrodipicolinate synthase from Histophilus somni (strain 129Pt) (Haemophilus somnus).